Reading from the N-terminus, the 433-residue chain is Malate synthase (433 aa).

16–17 (TS) contacts acetyl-CoA. A Mg(2+)-binding site is contributed by Asp52. Residue Arg84 coordinates acetyl-CoA. Glyoxylate is bound by residues Arg84, Glu158, and 191 to 192 (VD). Mg(2+)-binding residues include Glu158 and Asp192. Residues Arg236 and Leu259 each contribute to the acetyl-CoA site. Asp388 serves as the catalytic Proton acceptor.

Belongs to the HpcH/HpaI aldolase family. Homotrimer and homohexamer in equilibrium. The cofactor is Mg(2+).

Its subcellular location is the cytoplasm. It carries out the reaction glyoxylate + acetyl-CoA + H2O = (S)-malate + CoA + H(+). Its pathway is carbohydrate metabolism; glyoxylate cycle; (S)-malate from isocitrate: step 2/2. Involved in the glyoxylate cycle which synthesizes precursors for carbohydrates from C2 compounds such as acetate. Catalyzes the Claisen condensation between acetyl-coenzyme A (acetyl-CoA) and glyoxylate to form the malyl-CoA intermediate that is subsequently hydrolyzed to produce malate and CoA. In Haloferax volcanii (strain ATCC 29605 / DSM 3757 / JCM 8879 / NBRC 14742 / NCIMB 2012 / VKM B-1768 / DS2) (Halobacterium volcanii), this protein is Malate synthase (aceB).